A 266-amino-acid polypeptide reads, in one-letter code: Sec-independent protein translocase protein TatC (266 aa).

6 consecutive transmembrane segments (helical) span residues 28–48, 93–113, 134–154, 183–203, 221–241, and 242–262; these read MIIA…YILF, FNIY…PYIF, GIIM…YFIL, LIMH…FIYF, HAFL…IFST, and IVVL…SFYV.

It belongs to the TatC family. As to quaternary structure, forms a complex with TatA.

It localises to the cell inner membrane. In terms of biological role, part of the twin-arginine translocation (Tat) system that transports large folded proteins containing a characteristic twin-arginine motif in their signal peptide across membranes. The protein is Sec-independent protein translocase protein TatC of Blattabacterium sp. subsp. Periplaneta americana (strain BPLAN) (Periplaneta americana symbiotic bacterium).